We begin with the raw amino-acid sequence, 734 residues long: Photosystem I P700 chlorophyll a apoprotein A2 (734 aa).

A run of 8 helical transmembrane segments spans residues 46 to 69, 135 to 158, 175 to 199, 273 to 291, 330 to 353, 369 to 395, 417 to 439, and 517 to 535; these read IFAS…FHVA, LYTG…LHLQ, LNHH…HVAI, IAHH…GHMY, IHFQ…QHMY, AALY…IFFI, AIKS…LYVH, and FLVH…LILV. [4Fe-4S] cluster contacts are provided by Cys559 and Cys568. The next 2 helical transmembrane spans lie at 575 to 596 and 643 to 665; these read AFYL…YWHW and LSVW…MFLI. The chlorophyll a site is built by His654, Met662, and Tyr670. A phylloquinone-binding site is contributed by Trp671. The chain crosses the membrane as a helical span at residues 707 to 727; that stretch reads LVGLAHFSVGYIFTYAAFLIA.

The protein belongs to the PsaA/PsaB family. The PsaA/B heterodimer binds the P700 chlorophyll special pair and subsequent electron acceptors. PSI consists of a core antenna complex that captures photons, and an electron transfer chain that converts photonic excitation into a charge separation. The eukaryotic PSI reaction center is composed of at least 11 subunits. P700 is a chlorophyll a/chlorophyll a' dimer, A0 is one or more chlorophyll a, A1 is one or both phylloquinones and FX is a shared 4Fe-4S iron-sulfur center. is required as a cofactor.

The protein localises to the plastid. It localises to the chloroplast thylakoid membrane. It catalyses the reaction reduced [plastocyanin] + hnu + oxidized [2Fe-2S]-[ferredoxin] = oxidized [plastocyanin] + reduced [2Fe-2S]-[ferredoxin]. Functionally, psaA and PsaB bind P700, the primary electron donor of photosystem I (PSI), as well as the electron acceptors A0, A1 and FX. PSI is a plastocyanin-ferredoxin oxidoreductase, converting photonic excitation into a charge separation, which transfers an electron from the donor P700 chlorophyll pair to the spectroscopically characterized acceptors A0, A1, FX, FA and FB in turn. Oxidized P700 is reduced on the lumenal side of the thylakoid membrane by plastocyanin. The protein is Photosystem I P700 chlorophyll a apoprotein A2 of Drimys granadensis.